We begin with the raw amino-acid sequence, 425 residues long: Dihydroorotase (425 aa).

2 residues coordinate Zn(2+): His-58 and His-60. Residues 60 to 62 (HFR) and Asn-92 contribute to the substrate site. 3 residues coordinate Zn(2+): Asp-150, His-177, and His-230. Asn-276 contacts substrate. Asp-303 is a binding site for Zn(2+). Asp-303 is a catalytic residue. Substrate contacts are provided by residues His-307 and 321–322 (FG).

The protein belongs to the metallo-dependent hydrolases superfamily. DHOase family. Class I DHOase subfamily. The cofactor is Zn(2+).

The enzyme catalyses (S)-dihydroorotate + H2O = N-carbamoyl-L-aspartate + H(+). Its pathway is pyrimidine metabolism; UMP biosynthesis via de novo pathway; (S)-dihydroorotate from bicarbonate: step 3/3. Functionally, catalyzes the reversible cyclization of carbamoyl aspartate to dihydroorotate. The chain is Dihydroorotase from Pediococcus pentosaceus (strain ATCC 25745 / CCUG 21536 / LMG 10740 / 183-1w).